A 466-amino-acid chain; its full sequence is Glycylpeptide N-tetradecanoyltransferase (466 aa).

The interval 1–21 is disordered; it reads MDNENNKNTKNSQQDSSFSEG. A compositionally biased stretch (polar residues) spans 8–19; sequence NTKNSQQDSSFS. Residue S17 is modified to Phosphoserine. Tetradecanoyl-CoA is bound by residues 51–54, 185–187, and 193–197; these read FKFW, LCI, and SKRLT. I466 serves as the catalytic Proton acceptor; via carboxylate.

Belongs to the NMT family. In terms of assembly, monomer.

The protein resides in the cytoplasm. It catalyses the reaction N-terminal glycyl-[protein] + tetradecanoyl-CoA = N-tetradecanoylglycyl-[protein] + CoA + H(+). Adds a myristoyl group to the N-terminal glycine residue of certain cellular proteins. This chain is Glycylpeptide N-tetradecanoyltransferase (nmt1), found in Schizosaccharomyces pombe (strain 972 / ATCC 24843) (Fission yeast).